The primary structure comprises 143 residues: Photosystem I reaction center subunit IV B, chloroplastic (143 aa).

Residues 1-51 (MASSSMASAASGFMVATPNIATSNTAPRTSMLFFSSSKNNTTTNFPRLVVR) constitute a chloroplast transit peptide. Residues 56-75 (AAPPAATATAEGEAPPAKAA) are compositionally biased toward low complexity. The tract at residues 56–86 (AAPPAATATAEGEAPPAKAAKPPPIGPKRGT) is disordered.

This sequence belongs to the PsaE family. Post-translationally, 2 isoforms exists (ratio 1:1). With or without the N-terminal alanine.

It localises to the plastid. The protein localises to the chloroplast thylakoid membrane. In terms of biological role, stabilizes the interaction between PsaC and the PSI core, assists the docking of the ferredoxin to PSI and interacts with ferredoxin-NADP oxidoreductase. This is Photosystem I reaction center subunit IV B, chloroplastic (PSAEB) from Nicotiana sylvestris (Wood tobacco).